Reading from the N-terminus, the 741-residue chain is Catalase-peroxidase (741 aa).

An N-terminal signal peptide occupies residues 1–23 (MLKKIITALGMSGMLLASSNAIA). The tryptophyl-tyrosyl-methioninium (Trp-Tyr) (with M-249) cross-link spans 102–223 (WHDAGTYRIY…YAATQMGLIY (122 aa)). Catalysis depends on H103, which acts as the Proton acceptor. The tryptophyl-tyrosyl-methioninium (Tyr-Met) (with W-102) cross-link spans 223 to 249 (YVNPEGPDGKPDIKGAASEIRQAFRAM). H264 serves as a coordination point for heme b.

It belongs to the peroxidase family. Peroxidase/catalase subfamily. Homodimer or homotetramer. Requires heme b as cofactor. In terms of processing, formation of the three residue Trp-Tyr-Met cross-link is important for the catalase, but not the peroxidase activity of the enzyme.

The enzyme catalyses H2O2 + AH2 = A + 2 H2O. It catalyses the reaction 2 H2O2 = O2 + 2 H2O. Its function is as follows. Bifunctional enzyme with both catalase and broad-spectrum peroxidase activity. This is Catalase-peroxidase from Francisella tularensis subsp. holarctica (strain FTNF002-00 / FTA).